Consider the following 316-residue polypeptide: Ribose-phosphate pyrophosphokinase (316 aa).

ATP contacts are provided by residues Asp-37–Glu-39 and Arg-96–Gln-97. Mg(2+) is bound by residues His-130 and Asp-171. Lys-194 is a catalytic residue. D-ribose 5-phosphate is bound by residues Arg-196 and Asp-221.

Belongs to the ribose-phosphate pyrophosphokinase family. Class I subfamily. As to quaternary structure, homohexamer. Requires Mg(2+) as cofactor.

Its subcellular location is the cytoplasm. It catalyses the reaction D-ribose 5-phosphate + ATP = 5-phospho-alpha-D-ribose 1-diphosphate + AMP + H(+). It functions in the pathway metabolic intermediate biosynthesis; 5-phospho-alpha-D-ribose 1-diphosphate biosynthesis; 5-phospho-alpha-D-ribose 1-diphosphate from D-ribose 5-phosphate (route I): step 1/1. Functionally, involved in the biosynthesis of the central metabolite phospho-alpha-D-ribosyl-1-pyrophosphate (PRPP) via the transfer of pyrophosphoryl group from ATP to 1-hydroxyl of ribose-5-phosphate (Rib-5-P). This is Ribose-phosphate pyrophosphokinase from Rhodopirellula baltica (strain DSM 10527 / NCIMB 13988 / SH1).